A 206-amino-acid chain; its full sequence is LexA repressor (206 aa).

Residues 28–48 (RAEIATRLGFKSANAAEEHLK) constitute a DNA-binding region (H-T-H motif). Catalysis depends on for autocatalytic cleavage activity residues serine 123 and lysine 160.

This sequence belongs to the peptidase S24 family. In terms of assembly, homodimer.

It carries out the reaction Hydrolysis of Ala-|-Gly bond in repressor LexA.. Its function is as follows. Represses a number of genes involved in the response to DNA damage (SOS response), including recA and lexA. In the presence of single-stranded DNA, RecA interacts with LexA causing an autocatalytic cleavage which disrupts the DNA-binding part of LexA, leading to derepression of the SOS regulon and eventually DNA repair. The chain is LexA repressor from Shewanella baltica (strain OS223).